We begin with the raw amino-acid sequence, 761 residues long: Elongation factor G, mitochondrial (761 aa).

The transit peptide at 1–42 (MSVQKMMRVPRKMVGGRIPFFTCSKVFSGFSRRSFHESPLAR) directs the protein to the mitochondrion. The region spanning 68–349 (NKLRNIGISA…AIVDYLPNPS (282 aa)) is the tr-type G domain. Residues 77-84 (AHIDSGKT), 148-152 (DTPGH), and 202-205 (NKMD) contribute to the GTP site.

It belongs to the TRAFAC class translation factor GTPase superfamily. Classic translation factor GTPase family. EF-G/EF-2 subfamily. The precursor is processed in two steps involving mitochondrial intermediate peptidase (MIP) and mitochondrial processing peptidase (MPP).

It localises to the mitochondrion. It participates in protein biosynthesis; polypeptide chain elongation. Functionally, mitochondrial GTPase that catalyzes the GTP-dependent ribosomal translocation step during translation elongation. During this step, the ribosome changes from the pre-translocational (PRE) to the post-translocational (POST) state as the newly formed A-site-bound peptidyl-tRNA and P-site-bound deacylated tRNA move to the P and E sites, respectively. Catalyzes the coordinated movement of the two tRNA molecules, the mRNA and conformational changes in the ribosome. In Saccharomyces cerevisiae (strain YJM789) (Baker's yeast), this protein is Elongation factor G, mitochondrial.